A 447-amino-acid chain; its full sequence is GTPase Der (447 aa).

EngA-type G domains follow at residues 3 to 167 (PVIA…FAER) and 181 to 354 (TRIA…AAAM). GTP is bound by residues 9-16 (GRPNVGKS), 56-60 (DTGGF), 119-122 (NKAE), 187-194 (GRPNVGKS), 234-238 (DTAGL), and 299-302 (NKWD). Residues 355 to 439 (VKLPTPKLTR…PLRIEFRTNK (85 aa)) form the KH-like domain.

Belongs to the TRAFAC class TrmE-Era-EngA-EngB-Septin-like GTPase superfamily. EngA (Der) GTPase family. Associates with the 50S ribosomal subunit.

Its function is as follows. GTPase that plays an essential role in the late steps of ribosome biogenesis. The chain is GTPase Der from Ralstonia nicotianae (strain ATCC BAA-1114 / GMI1000) (Ralstonia solanacearum).